The following is a 275-amino-acid chain: UPF0328 protein ECU05_0050 (275 aa).

Belongs to the UPF0328 family.

This Encephalitozoon cuniculi (strain GB-M1) (Microsporidian parasite) protein is UPF0328 protein ECU05_0050.